Reading from the N-terminus, the 494-residue chain is Probable cytosol aminopeptidase (494 aa).

K260 and D265 together coordinate Mn(2+). The active site involves K272. Mn(2+) is bound by residues D283, D342, and E344. R346 is a catalytic residue.

Belongs to the peptidase M17 family. Mn(2+) serves as cofactor.

It localises to the cytoplasm. The enzyme catalyses Release of an N-terminal amino acid, Xaa-|-Yaa-, in which Xaa is preferably Leu, but may be other amino acids including Pro although not Arg or Lys, and Yaa may be Pro. Amino acid amides and methyl esters are also readily hydrolyzed, but rates on arylamides are exceedingly low.. It catalyses the reaction Release of an N-terminal amino acid, preferentially leucine, but not glutamic or aspartic acids.. Presumably involved in the processing and regular turnover of intracellular proteins. Catalyzes the removal of unsubstituted N-terminal amino acids from various peptides. This chain is Probable cytosol aminopeptidase, found in Bacillus thuringiensis subsp. konkukian (strain 97-27).